The primary structure comprises 363 residues: MAAARPTVSIYNKDGSVSSETLALPFVFKAPIRPDLVRSVHTAVAKNKRQPYAVSEKAGHQTSAESWGTGRALARIPRVGGGGTHRSGQAAFGNMCRSGRMFAPTKTWRKWHVKVNQNEKRYAIASAVAASGVPSLLLARGHRIEEIPEVPLVVDDAVQSFQKTKEAVALLKEIKAYRDVIKVANSRKLRAGKGKLRNRRHVQRRGPLVVFNEDTGIVKAFRNIPGVEIVNVRRLNLLQLAPGGHLGRFVIWTKSAFGLLDSVFGSTTEVAQLKKNYFLPENIISNADVTRLINSDEIQSIVKAAGPSRVKRAHVQKKNPLKNKAVLSRLNPYAKAYKANVKINSEKTPKAAGEKFLSVLHEN.

Residues proline 280–asparagine 363 form a C-terminal-extended nuclear localization signal region.

It belongs to the universal ribosomal protein uL4 family. Component of the large ribosomal subunit (LSU). Mature yeast ribosomes consist of a small (40S) and a large (60S) subunit. The 40S small subunit contains 1 molecule of ribosomal RNA (18S rRNA) and at least 33 different proteins. The large 60S subunit contains 3 rRNA molecules (25S, 5.8S and 5S rRNA) and at least 46 different proteins. uL4 is associated with the polypeptide exit tunnel. uL4 interacts with its chaperone ACL4 and the nuclear import receptor KAP104.

Its subcellular location is the cytoplasm. Functionally, component of the ribosome, a large ribonucleoprotein complex responsible for the synthesis of proteins in the cell. The small ribosomal subunit (SSU) binds messenger RNAs (mRNAs) and translates the encoded message by selecting cognate aminoacyl-transfer RNA (tRNA) molecules. The large subunit (LSU) contains the ribosomal catalytic site termed the peptidyl transferase center (PTC), which catalyzes the formation of peptide bonds, thereby polymerizing the amino acids delivered by tRNAs into a polypeptide chain. The nascent polypeptides leave the ribosome through a tunnel in the LSU and interact with protein factors that function in enzymatic processing, targeting, and the membrane insertion of nascent chains at the exit of the ribosomal tunnel. This Schizosaccharomyces pombe (strain 972 / ATCC 24843) (Fission yeast) protein is Large ribosomal subunit protein uL4B (rpl401).